Reading from the N-terminus, the 358-residue chain is B3 domain-containing transcription factor NGA3 (358 aa).

Residues 1–14 show a composition bias toward polar residues; it reads MDLSLAPTTTTSSD. The segment at 1–45 is disordered; it reads MDLSLAPTTTTSSDQEQDRDQELTSNIGASSSSGPSGNNNNLPMM. Positions 25–45 are enriched in low complexity; the sequence is SNIGASSSSGPSGNNNNLPMM. Positions 56–162 form a DNA-binding region, TF-B3; that stretch reads FDKVVTPSDV…KLYIDWRHRP (107 aa). The tract at residues 310 to 358 is disordered; sequence EIGASSSSSSALRLNLSTDHDDDNDDGDDGDDDQFAKKGKSSLSLNFNP. Over residues 329 to 342 the composition is skewed to acidic residues; that stretch reads HDDDNDDGDDGDDD.

It localises to the nucleus. Regulates lateral organ growth. Functionally redundant with NGA1, NGA2 and NGA4. The polypeptide is B3 domain-containing transcription factor NGA3 (NGA3) (Arabidopsis thaliana (Mouse-ear cress)).